The chain runs to 293 residues: Probable E3 ubiquitin-protein ligase RNF144A-B (293 aa).

The tract at residues 16–237 (PLLSCKLCLG…YDKGPCRNKL (222 aa)) is TRIAD supradomain. Zn(2+)-binding residues include Cys20, Cys23, Cys43, Cys46, Cys111, Cys116, Cys135, Cys138, Cys143, Cys146, His151, Cys156, Cys186, and Cys189. Residues 20-70 (CKLCLGEFPLEQMTTISQCQCIFCSLCLKQYVELLIKEGLETAISCPDSAC) form an RING-type 1 zinc finger. The segment at 91–156 (QHYKRLQFER…RADCHTGQAC (66 aa)) adopts an IBR-type zinc-finger fold. An RING-type 2; atypical zinc finger spans residues 186 to 215 (CPKCKVYIERDEGCAQMMCKNCKHAFCWYC). Residue Cys199 is part of the active site. Zn(2+) contacts are provided by Cys204, Cys207, Cys212, Cys215, His227, and Cys233. Residues 251–271 (VVGIFAGFGLLLLVASPFLLL) form a helical membrane-spanning segment.

This sequence belongs to the RBR family. RNF144 subfamily.

Its subcellular location is the membrane. The catalysed reaction is [E2 ubiquitin-conjugating enzyme]-S-ubiquitinyl-L-cysteine + [acceptor protein]-L-lysine = [E2 ubiquitin-conjugating enzyme]-L-cysteine + [acceptor protein]-N(6)-ubiquitinyl-L-lysine.. It functions in the pathway protein modification; protein ubiquitination. Its function is as follows. E3 ubiquitin-protein ligase which accepts ubiquitin from E2 ubiquitin-conjugating enzymes ube2l3 and ube2l6 in the form of a thioester and then directly transfers the ubiquitin to targeted substrates. The chain is Probable E3 ubiquitin-protein ligase RNF144A-B (rnf144ab) from Danio rerio (Zebrafish).